Here is a 278-residue protein sequence, read N- to C-terminus: Myb/SANT-like DNA-binding domain-containing protein 1 (278 aa).

The 88-residue stretch at 44-131 (RNWTDAEMRG…WPYYLAIDRI (88 aa)) folds into the Myb-like domain. A disordered region spans residues 139–167 (CEGKLPDGQQPGPSTSQTEASLSPSAKST). A compositionally biased stretch (polar residues) spans 149–166 (PGPSTSQTEASLSPSAKS).

The protein is Myb/SANT-like DNA-binding domain-containing protein 1 (Msantd1) of Mus musculus (Mouse).